Reading from the N-terminus, the 332-residue chain is Putative peptide import ATP-binding protein BruAb2_1033 (332 aa).

An ABC transporter domain is found at 11–261 (LEVSNLSVDF…PLHPYTEGLL (251 aa)). ATP is bound at residue 47-54 (GESGSGKS).

This sequence belongs to the ABC transporter superfamily. As to quaternary structure, the complex is composed of two ATP-binding proteins (BruAb2_1033 and BruAb2_1034), two transmembrane proteins (BruAb2_1031 and BruAb2_1032) and a solute-binding protein (BruAb2_1030).

The protein localises to the cell inner membrane. Functionally, probably part of an ABC transporter complex that could be involved in peptide import. Probably responsible for energy coupling to the transport system. This is Putative peptide import ATP-binding protein BruAb2_1033 from Brucella abortus biovar 1 (strain 9-941).